The sequence spans 427 residues: UPF0229 protein YeaH (427 aa).

Residues 79–90 (NDHFVQNDRIER) are compositionally biased toward basic and acidic residues. Residues 79–110 (NDHFVQNDRIERPQGGGGGSGSGQGQASQDGE) form a disordered region. Positions 92–102 (QGGGGGSGSGQ) are enriched in gly residues.

It belongs to the UPF0229 family.

The protein is UPF0229 protein YeaH of Escherichia coli O139:H28 (strain E24377A / ETEC).